Here is an 85-residue protein sequence, read N- to C-terminus: Protein BTH_I0359 (85 aa).

The polypeptide is Protein BTH_I0359 (Burkholderia thailandensis (strain ATCC 700388 / DSM 13276 / CCUG 48851 / CIP 106301 / E264)).